The chain runs to 187 residues: Threonylcarbamoyl-AMP synthase (187 aa).

The YrdC-like domain maps to 3 to 187; that stretch reads NSELLKIIWA…LLNGYLYRKR (185 aa).

This sequence belongs to the SUA5 family. TsaC subfamily.

Its subcellular location is the cytoplasm. It carries out the reaction L-threonine + hydrogencarbonate + ATP = L-threonylcarbamoyladenylate + diphosphate + H2O. Functionally, required for the formation of a threonylcarbamoyl group on adenosine at position 37 (t(6)A37) in tRNAs that read codons beginning with adenine. Catalyzes the conversion of L-threonine, HCO(3)(-)/CO(2) and ATP to give threonylcarbamoyl-AMP (TC-AMP) as the acyladenylate intermediate, with the release of diphosphate. In Riesia pediculicola (strain USDA), this protein is Threonylcarbamoyl-AMP synthase.